The primary structure comprises 262 residues: Acyl-[acyl-carrier-protein]--UDP-N-acetylglucosamine O-acyltransferase (262 aa).

The protein belongs to the transferase hexapeptide repeat family. LpxA subfamily. In terms of assembly, homotrimer.

The protein resides in the cytoplasm. The catalysed reaction is a (3R)-hydroxyacyl-[ACP] + UDP-N-acetyl-alpha-D-glucosamine = a UDP-3-O-[(3R)-3-hydroxyacyl]-N-acetyl-alpha-D-glucosamine + holo-[ACP]. It participates in glycolipid biosynthesis; lipid IV(A) biosynthesis; lipid IV(A) from (3R)-3-hydroxytetradecanoyl-[acyl-carrier-protein] and UDP-N-acetyl-alpha-D-glucosamine: step 1/6. Functionally, involved in the biosynthesis of lipid A, a phosphorylated glycolipid that anchors the lipopolysaccharide to the outer membrane of the cell. In Campylobacter curvus (strain 525.92), this protein is Acyl-[acyl-carrier-protein]--UDP-N-acetylglucosamine O-acyltransferase.